Here is a 209-residue protein sequence, read N- to C-terminus: Small ribosomal subunit protein uS3 (209 aa).

A KH type-2 domain is found at 38 to 107 (IRKIIKNKYY…RVVINIEEIK (70 aa)).

The protein belongs to the universal ribosomal protein uS3 family. As to quaternary structure, part of the 30S ribosomal subunit. Forms a tight complex with proteins S10 and S14.

In terms of biological role, binds the lower part of the 30S subunit head. Binds mRNA in the 70S ribosome, positioning it for translation. This is Small ribosomal subunit protein uS3 from Thermotoga maritima (strain ATCC 43589 / DSM 3109 / JCM 10099 / NBRC 100826 / MSB8).